The chain runs to 148 residues: Trypsin inhibitor CMe (148 aa).

The signal sequence occupies residues 1-24 (MAFKYQLLLSAAVMLAILVATATS).

This sequence belongs to the protease inhibitor I6 (cereal trypsin/alpha-amylase inhibitor) family. In terms of processing, five disulfide bonds, which are essential for the inhibitor activity, are probably present. As to expression, expressed in the developing endosperm. Not detected in embryo, aleurone, coleoptile, roots and leaves.

The protein resides in the secreted. In terms of biological role, inhibits trypsin in vitro. Probably plays a protective role through inhibition of insect midgut proteases. The sequence is that of Trypsin inhibitor CMe (ITR1) from Hordeum vulgare (Barley).